A 65-amino-acid polypeptide reads, in one-letter code: Large ribosomal subunit protein bL35 (65 aa).

The segment at 1–26 is disordered; sequence MPKIKTVRGAAKRFKKTASGGFKRKQ. Residues 10–26 show a composition bias toward basic residues; that stretch reads AAKRFKKTASGGFKRKQ.

This sequence belongs to the bacterial ribosomal protein bL35 family.

The polypeptide is Large ribosomal subunit protein bL35 (Haemophilus ducreyi (strain 35000HP / ATCC 700724)).